The following is a 251-amino-acid chain: Astacin (251 aa).

The first 15 residues, 1 to 15 (MQCAVLLVLLGVVAA), serve as a signal peptide directing secretion. Residues 16 to 49 (SPIIPEAARALYYNDGMFEGDIKLRAGRQPARVG) constitute a propeptide, activation peptide. One can recognise a Peptidase M12A domain in the interval 50–248 (AAILGDEYLW…INNLYTNECS (199 aa)). 2 disulfide bridges follow: Cys-91–Cys-247 and Cys-113–Cys-133. A Zn(2+)-binding site is contributed by His-141. Glu-142 is a catalytic residue. The Zn(2+) site is built by His-145 and His-151. Residues 250 to 251 (RH) constitute a propeptide that is removed on maturation.

Monomer. Zn(2+) serves as cofactor.

It carries out the reaction Hydrolysis of peptide bonds in substrates containing five or more amino acids, preferentially with Ala in P1', and Pro in P2'.. In terms of biological role, metalloprotease. This protease prefers to cleave in front of small aliphatic residues (P1'). The presence of Lys or Arg in the P1 and P2 position yields high-turnover substrates. In the P3 position the enzyme prefers Pro &gt; Val &gt; Leu &gt; Ala &gt; Gly. The chain is Astacin from Astacus astacus (Noble crayfish).